The following is a 506-amino-acid chain: Probable alpha-L-arabinofuranosidase B (506 aa).

The N-terminal stretch at 1–26 is a signal peptide; it reads MLSQPSRERAFVLALGLVVSSSLAAA. Positions 27–343 are catalytic; sequence APCDIYSSGG…ADIVAANYAV (317 aa). Intrachain disulfides connect cysteine 29-cysteine 39, cysteine 89-cysteine 94, and cysteine 184-cysteine 185. Aspartate 227 is a binding site for substrate. The Nucleophile role is filled by glutamate 229. Asparagine 230 serves as a coordination point for substrate. The N-linked (GlcNAc...) asparagine glycan is linked to asparagine 285. A substrate-binding site is contributed by glycine 304. Aspartate 305 functions as the Proton donor in the catalytic mechanism. The ABD stretch occupies residues 344 to 506; the sequence is TSLTSGPALT…VSWVISSGFA (163 aa). Cysteine 409 and cysteine 447 are oxidised to a cystine. Histidine 424, asparagine 426, phenylalanine 427, aspartate 443, histidine 471, leucine 476, and aspartate 496 together coordinate substrate.

Belongs to the glycosyl hydrolase 54 family.

The protein localises to the secreted. The catalysed reaction is Hydrolysis of terminal non-reducing alpha-L-arabinofuranoside residues in alpha-L-arabinosides.. It participates in glycan metabolism; L-arabinan degradation. Its function is as follows. Alpha-L-arabinofuranosidase involved in the degradation of arabinoxylan, a major component of plant hemicellulose. Able to hydrolyze 1,5-, 1,3- and 1,2-alpha-linkages not only in L-arabinofuranosyl oligosaccharides, but also in polysaccharides containing terminal non-reducing L-arabinofuranoses in side chains, like L-arabinan, arabinogalactan and arabinoxylan. This Aspergillus clavatus (strain ATCC 1007 / CBS 513.65 / DSM 816 / NCTC 3887 / NRRL 1 / QM 1276 / 107) protein is Probable alpha-L-arabinofuranosidase B (abfB).